Consider the following 868-residue polypeptide: Translation initiation factor IF-2 (868 aa).

Disordered regions lie at residues 158 to 178 (VKEE…DELT) and 200 to 269 (KKEE…KYRE). The span at 200 to 209 (KKEEVKPEKV) shows a compositional bias: basic and acidic residues. Residues 249 to 260 (RGGRSKFKKKKG) are compositionally biased toward basic residues. Positions 368 to 537 (GRAPVVTIMG…LLQSEVLELK (170 aa)) constitute a tr-type G domain. The G1 stretch occupies residues 377-384 (GHVDHGKT). 377 to 384 (GHVDHGKT) lines the GTP pocket. Positions 402 to 406 (GITQH) are G2. The tract at residues 423-426 (DTPG) is G3. GTP-binding positions include 423-427 (DTPGH) and 477-480 (NKMD). Positions 477–480 (NKMD) are G4. The segment at 513 to 515 (SAK) is G5.

The protein belongs to the TRAFAC class translation factor GTPase superfamily. Classic translation factor GTPase family. IF-2 subfamily.

Its subcellular location is the cytoplasm. Functionally, one of the essential components for the initiation of protein synthesis. Protects formylmethionyl-tRNA from spontaneous hydrolysis and promotes its binding to the 30S ribosomal subunits. Also involved in the hydrolysis of GTP during the formation of the 70S ribosomal complex. The sequence is that of Translation initiation factor IF-2 from Legionella pneumophila (strain Lens).